Reading from the N-terminus, the 339-residue chain is tRNA N6-adenosine threonylcarbamoyltransferase (339 aa).

Fe cation-binding residues include histidine 111 and histidine 115. Residues 134-138 (LVSGG), aspartate 167, glycine 180, and asparagine 274 each bind substrate. Aspartate 302 contributes to the Fe cation binding site.

This sequence belongs to the KAE1 / TsaD family. Fe(2+) serves as cofactor.

It localises to the cytoplasm. The catalysed reaction is L-threonylcarbamoyladenylate + adenosine(37) in tRNA = N(6)-L-threonylcarbamoyladenosine(37) in tRNA + AMP + H(+). In terms of biological role, required for the formation of a threonylcarbamoyl group on adenosine at position 37 (t(6)A37) in tRNAs that read codons beginning with adenine. Is involved in the transfer of the threonylcarbamoyl moiety of threonylcarbamoyl-AMP (TC-AMP) to the N6 group of A37, together with TsaE and TsaB. TsaD likely plays a direct catalytic role in this reaction. This chain is tRNA N6-adenosine threonylcarbamoyltransferase, found in Methylobacillus flagellatus (strain ATCC 51484 / DSM 6875 / VKM B-1610 / KT).